We begin with the raw amino-acid sequence, 174 residues long: Methionine-R-sulfoxide reductase B2, mitochondrial (174 aa).

A mitochondrion-targeting transit peptide spans 1–61 (MARLLRALRG…PEQFYVTREK (61 aa)). The MsrB domain occupies 62–172 (GTEAPFSGMY…NSVALKFKPS (111 aa)). 4 residues coordinate Zn(2+): Cys82, Cys85, Cys138, and Cys141. Cys161 acts as the Nucleophile in catalysis.

Belongs to the MsrB Met sulfoxide reductase family. It depends on Zn(2+) as a cofactor.

It is found in the mitochondrion. It catalyses the reaction L-methionyl-[protein] + [thioredoxin]-disulfide + H2O = L-methionyl-(R)-S-oxide-[protein] + [thioredoxin]-dithiol. The enzyme catalyses [thioredoxin]-disulfide + L-methionine + H2O = L-methionine (R)-S-oxide + [thioredoxin]-dithiol. Functionally, methionine-sulfoxide reductase that specifically reduces methionine (R)-sulfoxide back to methionine. While in many cases, methionine oxidation is the result of random oxidation following oxidative stress, methionine oxidation is also a post-translational modification that takes place on specific residue. Upon oxidative stress, may play a role in the preservation of mitochondrial integrity by decreasing the intracellular reactive oxygen species build-up through its scavenging role, hence contributing to cell survival and protein maintenance. This is Methionine-R-sulfoxide reductase B2, mitochondrial (Msrb2) from Rattus norvegicus (Rat).